Here is a 2118-residue protein sequence, read N- to C-terminus: Separin (2118 aa).

Ser-1121 is modified (phosphoserine). Positions 1309–1318 are enriched in basic residues; it reads KCSGRGRRRI. The segment at 1309–1352 is disordered; it reads KCSGRGRRRIASVPPPLHNSSQKGLEEEGPPCTPKPPGRARQAG. Phosphoserine is present on residues Ser-1391 and Ser-1394. The interval 1408–1428 is disordered; sequence EEPKRRGTASRTRGQTRKGRS. Ser-1504 is subject to Phosphoserine. One can recognise a Peptidase C50 domain in the interval 1941–2036; it reads PQNTFYVLNP…SAALAVHGNL (96 aa). The active site involves Cys-2025.

Interacts with PTTG1. Interacts with RAD21. In terms of processing, autocleaves. This function, which is not essential for its protease activity, is unknown. Phosphorylated by CDK1. There is 8 Ser/Thr phosphorylation sites. Among them, only Ser-1121 phosphorylation is the major site, which conducts to the enzyme inactivation.

It is found in the cytoplasm. The protein localises to the nucleus. It catalyses the reaction All bonds known to be hydrolyzed by this endopeptidase have arginine in P1 and an acidic residue in P4. P6 is often occupied by an acidic residue or by a hydroxy-amino-acid residue, the phosphorylation of which enhances cleavage.. Regulated by at least two independent mechanisms. First, it is inactivated via its interaction with securin/PTTG1, which probably covers its active site. The association with PTTG1 is not only inhibitory, since PTTG1 is also required for activating it, the enzyme being inactive in cells in which PTTG1 is absent. PTTG1 degradation at anaphase, liberates it and triggers RAD21 cleavage. Second, phosphorylation at Ser-1121 inactivates it. The complete phosphorylation during mitosis, is removed when cells undergo anaphase. Activation of the enzyme at the metaphase-anaphase transition probably requires the removal of both securin and inhibitory phosphate. Caspase-like protease, which plays a central role in the chromosome segregation by cleaving the SCC1/RAD21 subunit of the cohesin complex at the onset of anaphase. During most of the cell cycle, it is inactivated by different mechanisms. This is Separin (Espl1) from Mus musculus (Mouse).